A 472-amino-acid chain; its full sequence is Adenosylhomocysteinase (472 aa).

Substrate contacts are provided by Thr64, Asp138, and Glu198. NAD(+) is bound at residue Thr199 to Thr201. Residues Lys228 and Asp232 each contribute to the substrate site. Residues Asn233, Gly262–Gly267, Glu285, Asn320, Ile341–His343, and Asn386 each bind NAD(+).

The protein belongs to the adenosylhomocysteinase family. The cofactor is NAD(+).

The protein resides in the cytoplasm. It catalyses the reaction S-adenosyl-L-homocysteine + H2O = L-homocysteine + adenosine. It functions in the pathway amino-acid biosynthesis; L-homocysteine biosynthesis; L-homocysteine from S-adenosyl-L-homocysteine: step 1/1. Its function is as follows. May play a key role in the regulation of the intracellular concentration of adenosylhomocysteine. The chain is Adenosylhomocysteinase from Prochlorococcus marinus (strain MIT 9215).